The following is a 530-amino-acid chain: Tegument protein UL21 homolog (530 aa).

Belongs to the alphaherpesvirinae UL21 protein family. In terms of assembly, interacts (via C-terminus) with UL16.

It is found in the virion tegument. The protein localises to the host cytoplasm. Its subcellular location is the host nucleus. In terms of biological role, may participate in DNA packaging/capsid maturation events. Promotes efficient incorporation of tegument proteins UL46, UL49, and US3 homologs into virions. May also play a role in capsid transport to the trans-Golgi network (TGN). The sequence is that of Tegument protein UL21 homolog from Equus caballus (Horse).